The chain runs to 348 residues: Carbamoyl phosphate synthase small chain (348 aa).

The CPSase stretch occupies residues 1–167; that stretch reads MKRYLITSDG…VKNIRGKGER (167 aa). The L-glutamine site is built by Ser-45, Gly-213, and Gly-215. The 181-residue stretch at 168 to 348 folds into the Glutamine amidotransferase type-1 domain; that stretch reads RILFIDLGSK…RRRTEDAAKG (181 aa). The active-site Nucleophile is the Cys-242. Positions 243, 246, 282, 284, and 285 each coordinate L-glutamine. Catalysis depends on residues His-321 and Glu-323.

The protein belongs to the CarA family. Composed of two chains; the small (or glutamine) chain promotes the hydrolysis of glutamine to ammonia, which is used by the large (or ammonia) chain to synthesize carbamoyl phosphate. Tetramer of heterodimers (alpha,beta)4.

The catalysed reaction is hydrogencarbonate + L-glutamine + 2 ATP + H2O = carbamoyl phosphate + L-glutamate + 2 ADP + phosphate + 2 H(+). It catalyses the reaction L-glutamine + H2O = L-glutamate + NH4(+). It participates in amino-acid biosynthesis; L-arginine biosynthesis; carbamoyl phosphate from bicarbonate: step 1/1. It functions in the pathway pyrimidine metabolism; UMP biosynthesis via de novo pathway; (S)-dihydroorotate from bicarbonate: step 1/3. Its function is as follows. Small subunit of the glutamine-dependent carbamoyl phosphate synthetase (CPSase). CPSase catalyzes the formation of carbamoyl phosphate from the ammonia moiety of glutamine, carbonate, and phosphate donated by ATP, constituting the first step of 2 biosynthetic pathways, one leading to arginine and/or urea and the other to pyrimidine nucleotides. The small subunit (glutamine amidotransferase) binds and cleaves glutamine to supply the large subunit with the substrate ammonia. This Thermoplasma acidophilum (strain ATCC 25905 / DSM 1728 / JCM 9062 / NBRC 15155 / AMRC-C165) protein is Carbamoyl phosphate synthase small chain.